We begin with the raw amino-acid sequence, 1046 residues long: UDP-N-acetylglucosamine--peptide N-acetylglucosaminyltransferase 110 kDa subunit (1046 aa).

N-acetylalanine is present on Ala2. Phosphoserine; by GSK3-beta; alternate is present on residues Ser3 and Ser4. Ser3 and Ser4 each carry an O-linked (GlcNAc) serine; alternate glycan. Ser20 is subject to Phosphoserine. TPR repeat units lie at residues 21–54 (FQGL…EPDN), 89–122 (AEAY…KPDF), 123–156 (IDGY…NPDL), 157–190 (YCVR…QPNF), 191–224 (AVAW…DPNF), 225–258 (LDAY…SPNH), 259–292 (AVVH…QPHF), 293–326 (PDAY…CPTH), 327–360 (ADSL…FPEF), 361–394 (AAAH…SPTF), 395–428 (ADAY…NPAF), and 429–462 (ADAH…KPDF). An O-linked (GlcNAc) serine; by autocatalysis glycan is attached at Ser399. Thr454 carries the post-translational modification Phosphothreonine. One copy of the TPR 13; truncated repeat lies at 463–473 (PDAYCNLAHCL). The short motif at 464-466 (DAY) is the DFP motif element. The short motif at 487-503 (KKLVSIVAEQLEKNRLP) is the Nuclear localization signal element. His508 serves as the catalytic Proton acceptor. UDP-binding positions include Gln849, Lys852, 906-908 (APK), 911-914 (HVRR), 930-932 (HTT), and Asp935. Tyr989 carries the post-translational modification Phosphotyrosine. The interval 991–1010 (KKIRGKVWKQRISSPLFNTK) is required for phosphatidylinositol 3,4,5-triphosphate binding.

It belongs to the glycosyltransferase 41 family. O-GlcNAc transferase subfamily. In terms of assembly, monomer; may exist in different oligomerization states in cells. Homotrimer, oligomerizes via TPR repeats 6 and 7. Trimerization is not necessary for activity in vitro, however it increases affinity for UDP-GlcNAc. Component of a THAP1/THAP3-HCFC1-OGT complex. Component of the NSL complex at least composed of MOF/KAT8, KANSL1, KANSL2, KANSL3, MCRS1, PHF20, OGT1/OGT, WDR5 and HCFC1. Found in a complex with KIF5B, RHOT1, RHOT2 and TRAK1. Found in a complex composed of at least SINHCAF, SIN3A, HDAC1, SAP30, RBBP4, OGT and TET1. Component of a complex composed of KMT2E/MLL5, OGT and USP7; the complex stabilizes KMT2E/MLL5, preventing KMT2E/MLL5 ubiquitination and proteasomal-mediated degradation. Interacts (via TPRs 1-6) with SIN3A; the interaction mediates transcriptional repression in parallel with histone deacetylase. Interacts (via TPR 5-6) with TET1, TET2 and TET3. Interacts (via TPR repeats 6 and 7) with ATXN10. Interacts with NSD2. Interacts with PROSER1; this interaction mediates TET2 O-GlcNAcylation and stability by promoting the interaction between OGT and TET2. Ubiquitinated by the SCF(FBXO31) complex, leading to its proteasomal degradation. Post-translationally, phosphorylation on Ser-3 or Ser-4 by GSK3-beta positively regulates its activity. Phosphorylation at Thr-454 by AMPK promotes nuclear localization. In terms of processing, glycosylated via autocatalysis; O-GlcNAcylation at Ser-399 promotes nuclear localization.

It is found in the cytoplasm. It localises to the nucleus. The protein localises to the cell membrane. The protein resides in the mitochondrion membrane. Its subcellular location is the cell projection. The enzyme catalyses L-seryl-[protein] + UDP-N-acetyl-alpha-D-glucosamine = 3-O-(N-acetyl-beta-D-glucosaminyl)-L-seryl-[protein] + UDP + H(+). It catalyses the reaction L-threonyl-[protein] + UDP-N-acetyl-alpha-D-glucosamine = 3-O-(N-acetyl-beta-D-glucosaminyl)-L-threonyl-[protein] + UDP + H(+). It participates in protein modification; protein glycosylation. Its activity is regulated as follows. Subject to product inhibition by UDP. In terms of biological role, catalyzes the transfer of a single N-acetylglucosamine from UDP-GlcNAc to a serine or threonine residue in cytoplasmic and nuclear proteins resulting in their modification with a beta-linked N-acetylglucosamine (O-GlcNAc). Glycosylates a large and diverse number of proteins including histone H2B, AKT1, AMPK, ATG4B, CAPRIN1, EZH2, FNIP1, GSDMD, KRT7, LMNA, LMNB1, LMNB2, RPTOR, HOXA1, PFKL, KMT2E/MLL5, MAPT/TAU, TET2, RBL2, RET, NOD2 and HCFC1. Can regulate their cellular processes via cross-talk between glycosylation and phosphorylation or by affecting proteolytic processing. Involved in insulin resistance in muscle and adipocyte cells via glycosylating insulin signaling components and inhibiting the 'Thr-308' phosphorylation of AKT1, enhancing IRS1 phosphorylation and attenuating insulin signaling. Involved in glycolysis regulation by mediating glycosylation of 6-phosphofructokinase PFKL, inhibiting its activity. Plays a key role in chromatin structure by mediating O-GlcNAcylation of 'Ser-112' of histone H2B: recruited to CpG-rich transcription start sites of active genes via its interaction with TET proteins (TET1, TET2 or TET3). As part of the NSL complex indirectly involved in acetylation of nucleosomal histone H4 on several lysine residues. O-GlcNAcylation of 'Ser-75' of EZH2 increases its stability, and facilitating the formation of H3K27me3 by the PRC2/EED-EZH2 complex. Stabilizes KMT2E/MLL5 by mediating its glycosylation, thereby preventing KMT2E/MLL5 ubiquitination. Regulates circadian oscillation of the clock genes and glucose homeostasis in the liver. Stabilizes clock proteins BMAL1 and CLOCK through O-glycosylation, which prevents their ubiquitination and subsequent degradation. Promotes the CLOCK-BMAL1-mediated transcription of genes in the negative loop of the circadian clock such as PER1/2 and CRY1/2. O-glycosylates HCFC1 and regulates its proteolytic processing and transcriptional activity. Component of a THAP1/THAP3-HCFC1-OGT complex that is required for the regulation of the transcriptional activity of RRM1. Regulates mitochondrial motility in neurons by mediating glycosylation of TRAK1. Promotes autophagy by mediating O-glycosylation of ATG4B. Acts as a regulator of mTORC1 signaling by mediating O-glycosylation of RPTOR and FNIP1: O-GlcNAcylation of RPTOR in response to glucose sufficiency promotes activation of the mTORC1 complex. The protein is UDP-N-acetylglucosamine--peptide N-acetylglucosaminyltransferase 110 kDa subunit (Ogt) of Mus musculus (Mouse).